The primary structure comprises 242 residues: MANVSMRDMLQAGVHFGHQARYWNPKMKPFIFGTRNRVHIINLEQTVPMFNTALKFLSGAAANKGKVLFVGTKRAASEAVKESAIASDQYYVNHRWLGGMLTNWKTVRQSIKRLKDLEIQSQDGTFEKLTKKETLMLNREMEKLEKSLGGIKNMGGLPDALFVIDADHEHIAIREANNLGIPVVAIVDTNSNPDGVDFIVPGNDDAIRAVSLYTNAVATAITEGRENTLVAQAEKDDFVEAE.

This sequence belongs to the universal ribosomal protein uS2 family.

The polypeptide is Small ribosomal subunit protein uS2 (Pseudoalteromonas translucida (strain TAC 125)).